The following is a 198-amino-acid chain: Pyridoxal 5'-phosphate synthase subunit PdxT (198 aa).

An L-glutamine-binding site is contributed by 52–54 (GES). Catalysis depends on cysteine 84, which acts as the Nucleophile. L-glutamine-binding positions include arginine 116 and 143 to 144 (IR). Residues histidine 179 and glutamate 181 each act as charge relay system in the active site.

This sequence belongs to the glutaminase PdxT/SNO family. In terms of assembly, in the presence of PdxS, forms a dodecamer of heterodimers. Only shows activity in the heterodimer.

It catalyses the reaction aldehydo-D-ribose 5-phosphate + D-glyceraldehyde 3-phosphate + L-glutamine = pyridoxal 5'-phosphate + L-glutamate + phosphate + 3 H2O + H(+). The enzyme catalyses L-glutamine + H2O = L-glutamate + NH4(+). It participates in cofactor biosynthesis; pyridoxal 5'-phosphate biosynthesis. Catalyzes the hydrolysis of glutamine to glutamate and ammonia as part of the biosynthesis of pyridoxal 5'-phosphate. The resulting ammonia molecule is channeled to the active site of PdxS. The polypeptide is Pyridoxal 5'-phosphate synthase subunit PdxT (Caldivirga maquilingensis (strain ATCC 700844 / DSM 13496 / JCM 10307 / IC-167)).